The chain runs to 69 residues: Cytochrome c oxidase subunit 8A, mitochondrial (69 aa).

The N-terminal 25 residues, 1 to 25 (MSSLTPLLLRSLTGPARRLMVPRAQ), are a transit peptide targeting the mitochondrion. The short motif at 2-19 (SSLTPLLLRSLTGPARRL) is the SIFI-degron element. Over 26 to 36 (VHSKPPREQLG) the chain is Mitochondrial matrix. The helical transmembrane segment at 37–60 (VLDITIGLTSCFVCCLLPAGWVLS) threads the bilayer. The Mitochondrial intermembrane portion of the chain corresponds to 61–69 (HLESYKKRE).

It belongs to the cytochrome c oxidase VIII family. Component of the cytochrome c oxidase (complex IV, CIV), a multisubunit enzyme composed of 14 subunits. The complex is composed of a catalytic core of 3 subunits MT-CO1, MT-CO2 and MT-CO3, encoded in the mitochondrial DNA, and 11 supernumerary subunits COX4I, COX5A, COX5B, COX6A, COX6B, COX6C, COX7A, COX7B, COX7C, COX8 and NDUFA4, which are encoded in the nuclear genome. The complex exists as a monomer or a dimer and forms supercomplexes (SCs) in the inner mitochondrial membrane with NADH-ubiquinone oxidoreductase (complex I, CI) and ubiquinol-cytochrome c oxidoreductase (cytochrome b-c1 complex, complex III, CIII), resulting in different assemblies (supercomplex SCI(1)III(2)IV(1) and megacomplex MCI(2)III(2)IV(2)). Post-translationally, in response to mitochondrial stress, the precursor protein is ubiquitinated by the SIFI complex in the cytoplasm before mitochondrial import, leading to its degradation. Within the SIFI complex, UBR4 initiates ubiquitin chain that are further elongated or branched by KCMF1.

It localises to the mitochondrion inner membrane. It functions in the pathway energy metabolism; oxidative phosphorylation. Its function is as follows. Component of the cytochrome c oxidase, the last enzyme in the mitochondrial electron transport chain which drives oxidative phosphorylation. The respiratory chain contains 3 multisubunit complexes succinate dehydrogenase (complex II, CII), ubiquinol-cytochrome c oxidoreductase (cytochrome b-c1 complex, complex III, CIII) and cytochrome c oxidase (complex IV, CIV), that cooperate to transfer electrons derived from NADH and succinate to molecular oxygen, creating an electrochemical gradient over the inner membrane that drives transmembrane transport and the ATP synthase. Cytochrome c oxidase is the component of the respiratory chain that catalyzes the reduction of oxygen to water. Electrons originating from reduced cytochrome c in the intermembrane space (IMS) are transferred via the dinuclear copper A center (CU(A)) of subunit 2 and heme A of subunit 1 to the active site in subunit 1, a binuclear center (BNC) formed by heme A3 and copper B (CU(B)). The BNC reduces molecular oxygen to 2 water molecules using 4 electrons from cytochrome c in the IMS and 4 protons from the mitochondrial matrix. In Rattus norvegicus (Rat), this protein is Cytochrome c oxidase subunit 8A, mitochondrial (Cox8a).